The sequence spans 129 residues: Trefoil factor 2 (129 aa).

The first 23 residues, 1–23, serve as a signal peptide directing secretion; it reads MGPRGAPLLAVVLVLGLHALVEG. P-type domains lie at 29-73 and 79-122; these read CRCS…FHPL and EQCV…FFPQ. 7 disulfide bridges follow: Cys-29/Cys-127, Cys-31/Cys-58, Cys-42/Cys-57, Cys-52/Cys-69, Cys-81/Cys-107, Cys-91/Cys-106, and Cys-101/Cys-118.

Stomach and pancreas.

The protein resides in the secreted. In terms of biological role, inhibits gastrointestinal motility and gastric acid secretion. Could function as a structural component of gastric mucus, possibly by stabilizing glycoproteins in the mucus gel through interactions with carbohydrate side chains. This Mus musculus (Mouse) protein is Trefoil factor 2 (Tff2).